A 956-amino-acid chain; its full sequence is MSEERVIRINKVLRELNISLERAVDYLKDKGIAIDANPNAKISDSEFNILQSQFAGDKGNKEASKEVGEEKRKEKEALRVEREKEIEDKRRQEEERQKQQEIIKARAVVSGPVQVGKIDLNPKKPAAVSPEEPVKAEEPKTVTPTQTEKPVQKETVQSEPVAPVVSEEKKVEKPIITEKKEVKAESSKTAQEPIISTDPTTAEETITTQYQKLSGTTLTGQTIDLSQFNKPKKKKEDPKITPNKPGTPGVGNNNNANKNKRKRIAPKPGTPGAPKPATGNAPGTPNPNKITPNSGGGFNANRNARPGFVKGNRPAIVAKVEPTEEEVKNQIRETLEKLQGKGGKSKAAKYRRDKRETHRQKSDDEQRALDEGSKTIKVTEFVTVGEIAIMMDVPITKVIGTCMSLGIMVTMNQRLDAETLTIVADEFGYDVEFITVDIEEAIEVVEDREEDLVTRAPIVTVMGHVDHGKTSLLDYIRKENVIAGESGGITQHIGAYGVTLDNGQKIAFLDTPGHEAFTAMRARGAQVTDIAIIVIAADDDIMPQTKEAISHAQAAGVPIIFAINKVDKPNANPDKIKERLAGMNLLVEDWGGKIQSHDISAKTGLGVKELLEKVLLEAEILDLKSNPNKAAQGTVVEAYLDKGKGYVSTILVQHGTLKIGDYMLAGKHHGKVKAMHDERGHTVLTAGPSTPVSVLGLDGAATAGDKFNVFEDEKEAKQIASKRSQLMREQSVRTQRHITLDEIGRRIALGQFKELNVILKGDVDGSVEALSDSFSKLSTEEVQINIIHKGVGAITETDVNLASASDAIIIGFNVRPAGNARQLADKEEIDIRYYSIIYAAIDDLKDAMEGMLAPEMKEEVLGTAEIREIFKISKVGSIAGCMVTDGKILRTSKIRVIRDGVVVHTGELVALKRFKDDVKEVTKGYDCGIQIKGFNDIEISDVIEAYHEVAIKKKLK.

Disordered regions lie at residues 53–102 (QFAG…QQEI), 116–315 (GKID…NRPA), and 334–371 (TLEK…ALDE). A compositionally biased stretch (basic and acidic residues) spans 58–102 (KGNKEASKEVGEEKRKEKEALRVEREKEIEDKRRQEEERQKQQEI). The span at 142 to 158 (VTPTQTEKPVQKETVQS) shows a compositional bias: polar residues. The span at 166 to 186 (SEEKKVEKPIITEKKEVKAES) shows a compositional bias: basic and acidic residues. A compositionally biased stretch (low complexity) spans 197 to 208 (TDPTTAEETITT). Residues 209–229 (QYQKLSGTTLTGQTIDLSQFN) show a composition bias toward polar residues. The span at 240-257 (ITPNKPGTPGVGNNNNAN) shows a compositional bias: low complexity. Residues 343 to 352 (GKSKAAKYRR) are compositionally biased toward basic residues. The span at 353-371 (DKRETHRQKSDDEQRALDE) shows a compositional bias: basic and acidic residues. The 169-residue stretch at 454 to 622 (TRAPIVTVMG…KVLLEAEILD (169 aa)) folds into the tr-type G domain. A G1 region spans residues 463–470 (GHVDHGKT). 463–470 (GHVDHGKT) lines the GTP pocket. The tract at residues 488–492 (GITQH) is G2. Residues 510-513 (DTPG) are G3. GTP-binding positions include 510-514 (DTPGH) and 564-567 (NKVD). The tract at residues 564–567 (NKVD) is G4. The interval 600 to 602 (SAK) is G5.

It belongs to the TRAFAC class translation factor GTPase superfamily. Classic translation factor GTPase family. IF-2 subfamily.

The protein localises to the cytoplasm. One of the essential components for the initiation of protein synthesis. Protects formylmethionyl-tRNA from spontaneous hydrolysis and promotes its binding to the 30S ribosomal subunits. Also involved in the hydrolysis of GTP during the formation of the 70S ribosomal complex. This Flavobacterium johnsoniae (strain ATCC 17061 / DSM 2064 / JCM 8514 / BCRC 14874 / CCUG 350202 / NBRC 14942 / NCIMB 11054 / UW101) (Cytophaga johnsonae) protein is Translation initiation factor IF-2.